Here is a 667-residue protein sequence, read N- to C-terminus: Cyclin-dependent kinase 17 (667 aa).

Disordered stretches follow at residues M1–N70 and D85–M184. Acidic residues-rich tracts occupy residues E99–D111 and D119–E144. A compositionally biased stretch (polar residues) spans T151 to T164. Positions Y328 to L609 constitute a Protein kinase domain. Residues L334–V342 and K357 each bind ATP. D449 acts as the Proton acceptor in catalysis. Positions 454 and 467 each coordinate Mg(2+). Residues H642–T667 form a disordered region. The span at H644 to T653 shows a compositional bias: basic residues.

Belongs to the protein kinase superfamily. CMGC Ser/Thr protein kinase family. CDC2/CDKX subfamily. In terms of assembly, interacts with cyy-1; the interaction is required to activate pct-1. It depends on Mg(2+) as a cofactor.

The protein localises to the cytoplasm. Its subcellular location is the cell projection. It is found in the dendrite. The protein resides in the axon. It catalyses the reaction L-seryl-[protein] + ATP = O-phospho-L-seryl-[protein] + ADP + H(+). It carries out the reaction L-threonyl-[protein] + ATP = O-phospho-L-threonyl-[protein] + ADP + H(+). In terms of biological role, serine/threonine-protein kinase, which, in association with cyy-1, regulates the trafficking of synaptic vesicles in the DA9 motor neuron and probably also in the DD motor neurons and in RIA interneurons. Sufficient for synaptic vesicle trafficking in the DA9 motor neuron. The polypeptide is Cyclin-dependent kinase 17 (Caenorhabditis elegans).